The sequence spans 183 residues: Copper transporter 4 (183 aa).

Residues 1-21 (MAMPMPMPPPGPGGDAPPAPT) form a disordered region. Helical transmembrane passes span 56 to 76 (VGMYFLCLLLVLALAALAEAL) and 115 to 135 (LAYLVMLAVMSFNAGVLLAAV).

It belongs to the copper transporter (Ctr) (TC 1.A.56) family. SLC31A subfamily.

It is found in the membrane. Involved in the transport of copper. In Oryza sativa subsp. japonica (Rice), this protein is Copper transporter 4 (COPT4).